A 350-amino-acid polypeptide reads, in one-letter code: Phosphotriesterase-related protein (350 aa).

Positions 22, 24, 169, 201, 230, and 298 each coordinate a divalent metal cation.

It belongs to the metallo-dependent hydrolases superfamily. Phosphotriesterase family. A divalent metal cation is required as a cofactor.

This chain is Phosphotriesterase-related protein, found in Drosophila melanogaster (Fruit fly).